The sequence spans 654 residues: Acetyl-coenzyme A synthetase (654 aa).

Residues 196–199 and Thr316 each bind CoA; that span reads RGGK. ATP contacts are provided by residues 392–394, 416–421, Asp506, and Arg521; these read GEP and DTWWQT. Ser529 is a binding site for CoA. Arg532 is an ATP binding site. The Mg(2+) site is built by Val543 and Val548. Residue Lys618 is modified to N6-acetyllysine.

Belongs to the ATP-dependent AMP-binding enzyme family. It depends on Mg(2+) as a cofactor. Acetylated. Deacetylation by the SIR2-homolog deacetylase activates the enzyme.

The catalysed reaction is acetate + ATP + CoA = acetyl-CoA + AMP + diphosphate. Catalyzes the conversion of acetate into acetyl-CoA (AcCoA), an essential intermediate at the junction of anabolic and catabolic pathways. AcsA undergoes a two-step reaction. In the first half reaction, AcsA combines acetate with ATP to form acetyl-adenylate (AcAMP) intermediate. In the second half reaction, it can then transfer the acetyl group from AcAMP to the sulfhydryl group of CoA, forming the product AcCoA. The protein is Acetyl-coenzyme A synthetase of Methylobacillus flagellatus (strain ATCC 51484 / DSM 6875 / VKM B-1610 / KT).